A 249-amino-acid chain; its full sequence is 3-deoxy-D-manno-octulosonic acid kinase (249 aa).

Aspartate 175 is a catalytic residue.

This sequence belongs to the protein kinase superfamily. KdkA/RfaP family.

It localises to the cell inner membrane. The enzyme catalyses an alpha-Kdo-(2-&gt;6)-lipid IVA + ATP = a 4-O-phospho-alpha-Kdo-(2-&gt;6)-lipid IVA + ADP + H(+). It functions in the pathway bacterial outer membrane biogenesis; LPS core biosynthesis. Catalyzes the ATP-dependent phosphorylation of the 3-deoxy-D-manno-octulosonic acid (Kdo) residue in Kdo-lipid IV(A) at the 4-OH position. The polypeptide is 3-deoxy-D-manno-octulosonic acid kinase (Xanthomonas oryzae pv. oryzae (strain PXO99A)).